We begin with the raw amino-acid sequence, 601 residues long: Urocanate hydratase (601 aa).

Residues 63–64 (GG) and Gln-141 each bind NAD(+). Residues 172-201 (SDRPSALLKQGLSPEGTAPGSGRSSAQVPG) are insert. Residues 179 to 200 (LKQGLSPEGTAPGSGRSSAQVP) form a disordered region. NAD(+) contacts are provided by residues 216–218 (GMG), Glu-236, 282–283 (NA), 307–311 (QTSAH), 317–318 (YL), and Tyr-368. Cys-456 is a catalytic residue. Residue Gly-538 coordinates NAD(+).

Belongs to the urocanase family. The cofactor is NAD(+).

The protein resides in the cytoplasm. The catalysed reaction is 4-imidazolone-5-propanoate = trans-urocanate + H2O. It functions in the pathway amino-acid degradation; L-histidine degradation into L-glutamate; N-formimidoyl-L-glutamate from L-histidine: step 2/3. Catalyzes the conversion of urocanate to 4-imidazolone-5-propionate. This is Urocanate hydratase from Ralstonia nicotianae (strain ATCC BAA-1114 / GMI1000) (Ralstonia solanacearum).